The chain runs to 282 residues: ATP phosphoribosyltransferase (282 aa).

The protein belongs to the ATP phosphoribosyltransferase family. Long subfamily. The cofactor is Mg(2+).

It is found in the cytoplasm. The enzyme catalyses 1-(5-phospho-beta-D-ribosyl)-ATP + diphosphate = 5-phospho-alpha-D-ribose 1-diphosphate + ATP. It participates in amino-acid biosynthesis; L-histidine biosynthesis; L-histidine from 5-phospho-alpha-D-ribose 1-diphosphate: step 1/9. With respect to regulation, feedback inhibited by histidine. Catalyzes the condensation of ATP and 5-phosphoribose 1-diphosphate to form N'-(5'-phosphoribosyl)-ATP (PR-ATP). Has a crucial role in the pathway because the rate of histidine biosynthesis seems to be controlled primarily by regulation of HisG enzymatic activity. The polypeptide is ATP phosphoribosyltransferase (Pyrobaculum neutrophilum (strain DSM 2338 / JCM 9278 / NBRC 100436 / V24Sta) (Thermoproteus neutrophilus)).